Reading from the N-terminus, the 278-residue chain is tRNA (guanine-N(7)-)-methyltransferase (278 aa).

S-adenosyl-L-methionine is bound by residues G63, 86–87, 119–120, and L139; these read EL and NA. Residue D142 is part of the active site. 217–219 is an S-adenosyl-L-methionine binding site; the sequence is TEE. The disordered stretch occupies residues 259–278; sequence IDSTTTTTTSTATITEVESK. Low complexity predominate over residues 261 to 278; sequence STTTTTTSTATITEVESK.

Belongs to the class I-like SAM-binding methyltransferase superfamily. TrmB family.

Its subcellular location is the nucleus. The enzyme catalyses guanosine(46) in tRNA + S-adenosyl-L-methionine = N(7)-methylguanosine(46) in tRNA + S-adenosyl-L-homocysteine. The protein operates within tRNA modification; N(7)-methylguanine-tRNA biosynthesis. In terms of biological role, catalyzes the formation of N(7)-methylguanine at position 46 (m7G46) in tRNA. In Dictyostelium discoideum (Social amoeba), this protein is tRNA (guanine-N(7)-)-methyltransferase (mettl1).